A 465-amino-acid polypeptide reads, in one-letter code: Adenosine 3'-phospho 5'-phosphosulfate transporter 1 (465 aa).

10 helical membrane-spanning segments follow: residues 13-33 (LVIC…SDLL), 61-81 (FLKL…GFLI), 142-162 (AVQL…WGVL), 185-205 (QFLV…YLQW), 270-290 (SYEY…MSGS), 299-319 (VTTL…SFTA), 339-359 (GVNL…GGFM), 370-390 (KFVF…LFIY), 391-407 (HTID…IMTL), and 424-444 (ISLL…LRVY).

The protein belongs to the nucleotide-sugar transporter family. SLC35B subfamily. In terms of tissue distribution, expressed throughout embryogenesis. During oogenesis, it is expressed strongly in the nurse cells of the germline. Maternally expressed at the syncytial blastoderm stage. Zygotically expressed, from after germ-band elongation in the invaginating salivary gland placodes. Remains expressed predominantly in this tissue throughout embryogenesis, but low-level expression may also be present throughout the embryo.

It localises to the golgi apparatus membrane. Its function is as follows. Mediates the transport of adenosine 3'-phospho 5'-phosphosulfate (PAPS), from cytosol into Golgi. PAPS is a universal sulfuryl donor for sulfation events that take place in the Golgi. Required for the dorsoventral patterning, suggesting that it mediates the transport of the sulfate donor required for the sulfotransferase activity of pip (pipe). This is Adenosine 3'-phospho 5'-phosphosulfate transporter 1 (sll) from Drosophila melanogaster (Fruit fly).